Reading from the N-terminus, the 239-residue chain is Cysteine-rich venom protein natrin-1 (239 aa).

The signal sequence occupies residues 1 to 18 (MIAFSLLCFAAVLQQSFG). The SCP domain occupies 37-165 (VDLHNSLRRR…AWSYFYVCQY (129 aa)). Intrachain disulfides connect cysteine 74-cysteine 152, cysteine 91-cysteine 166, cysteine 147-cysteine 163, cysteine 185-cysteine 192, cysteine 188-cysteine 197, cysteine 201-cysteine 234, cysteine 210-cysteine 228, and cysteine 219-cysteine 232. The ShKT domain occupies 201–234 (CTIYNKLTNCDSLLKQSSCQDDWIKSNCPASCFC).

Expressed by the venom gland.

The protein resides in the secreted. Its function is as follows. Inhibits calcium-activated potassium channels (KCa1.1/KCNMA1), voltage-gated potassium channel Kv1.3/KCNA3, and the calcium release channel/ryanodine receptor (RyR). Binds specifically to type 1 RyR (RyR1) from skeletal muscle. Inhibit both the binding of ryanodine to RyR1, and RyR1's calcium-channel activity. Inhibits carbachol-induced muscle contraction and weakly blocks muscle contraction evoked by potassium. In Naja atra (Chinese cobra), this protein is Cysteine-rich venom protein natrin-1.